The sequence spans 292 residues: Protease HtpX homolog (292 aa).

2 helical membrane passes run 4–24 (IFLF…TLRL) and 42–62 (ALLV…LAMS). Histidine 147 serves as a coordination point for Zn(2+). Residue glutamate 148 is part of the active site. Residue histidine 151 participates in Zn(2+) binding. A run of 2 helical transmembrane segments spans residues 158–178 (VTLA…SRII) and 198–218 (FVTS…IVMW). Zn(2+) is bound at residue glutamate 224.

Belongs to the peptidase M48B family. Zn(2+) is required as a cofactor.

It localises to the cell inner membrane. This chain is Protease HtpX homolog, found in Nitrosomonas eutropha (strain DSM 101675 / C91 / Nm57).